The sequence spans 420 residues: Ribosome biogenesis protein WDR12 homolog (420 aa).

Residues 10-92 (VQVHLKTKQE…EDAIEIEYVE (83 aa)) are ubiquitin-like (UBL) domain. 7 WD repeats span residues 104-142 (LHDD…LTIS), 143-185 (GHTA…NAVD), 192-231 (GHER…GVEG), 250-288 (GHRE…IKTE), 290-329 (STNK…GSVV), 335-375 (GHNA…APLY), and 379-417 (GHGD…AEDT).

Belongs to the WD repeat WDR12/YTM1 family.

It localises to the nucleus. Its subcellular location is the nucleolus. It is found in the nucleoplasm. Functionally, required for maturation of ribosomal RNAs and formation of the large ribosomal subunit. In Drosophila simulans (Fruit fly), this protein is Ribosome biogenesis protein WDR12 homolog.